Reading from the N-terminus, the 422-residue chain is UDP-N-acetylglucosamine 1-carboxyvinyltransferase (422 aa).

Residue 24–25 (KN) participates in phosphoenolpyruvate binding. A UDP-N-acetyl-alpha-D-glucosamine-binding site is contributed by arginine 93. Cysteine 117 functions as the Proton donor in the catalytic mechanism. Position 117 is a 2-(S-cysteinyl)pyruvic acid O-phosphothioketal (cysteine 117). UDP-N-acetyl-alpha-D-glucosamine is bound by residues 122–126 (RPVDL), 162–165 (KVSV), aspartate 307, and isoleucine 329.

This sequence belongs to the EPSP synthase family. MurA subfamily.

Its subcellular location is the cytoplasm. It carries out the reaction phosphoenolpyruvate + UDP-N-acetyl-alpha-D-glucosamine = UDP-N-acetyl-3-O-(1-carboxyvinyl)-alpha-D-glucosamine + phosphate. It functions in the pathway cell wall biogenesis; peptidoglycan biosynthesis. Its function is as follows. Cell wall formation. Adds enolpyruvyl to UDP-N-acetylglucosamine. This is UDP-N-acetylglucosamine 1-carboxyvinyltransferase from Vibrio atlanticus (strain LGP32) (Vibrio splendidus (strain Mel32)).